A 222-amino-acid chain; its full sequence is Ribulose-phosphate 3-epimerase (222 aa).

Ser-7 provides a ligand contact to substrate. His-32, Asp-34, and His-65 together coordinate a divalent metal cation. Asp-34 acts as the Proton acceptor in catalysis. Substrate is bound by residues His-65, 141–144 (GFSG), 174–176 (DGG), and 196–197 (GS). Asp-174 contacts a divalent metal cation. Asp-174 serves as the catalytic Proton donor.

The protein belongs to the ribulose-phosphate 3-epimerase family. Requires a divalent metal cation as cofactor.

The catalysed reaction is D-ribulose 5-phosphate = D-xylulose 5-phosphate. It functions in the pathway carbohydrate degradation. Its function is as follows. Catalyzes the reversible epimerization of D-ribulose 5-phosphate to D-xylulose 5-phosphate. The polypeptide is Ribulose-phosphate 3-epimerase (Aquifex aeolicus (strain VF5)).